A 252-amino-acid chain; its full sequence is Probable transcriptional regulatory protein RT0442 (252 aa).

Positions 1-22 are disordered; it reads MSGHSKFKNIQHRKGAQDKKKS.

It belongs to the TACO1 family.

It is found in the cytoplasm. The protein is Probable transcriptional regulatory protein RT0442 of Rickettsia typhi (strain ATCC VR-144 / Wilmington).